The chain runs to 67 residues: Large ribosomal subunit protein uL29 (67 aa).

Belongs to the universal ribosomal protein uL29 family.

The chain is Large ribosomal subunit protein uL29 from Pelotomaculum thermopropionicum (strain DSM 13744 / JCM 10971 / SI).